Reading from the N-terminus, the 402-residue chain is Multidrug resistance protein MdtH (402 aa).

The next 11 membrane-spanning stretches (helical) occupy residues 13-33 (YFLLVDNMLVVLGFFVVFPLI), 34-54 (SIRFVDQMGWAALMVGIALGL), 99-116 (PWVLWFSCILSGLGGTLF), 139-159 (ILMMQDSAGAVIGALLGSWLL), 165-185 (LVCSAGAALFIACAAFNAWYL), 214-234 (VLTLTGYYMLAVQVMLMLPIM), 243-263 (AAVKWMYAIEATISLTLLYPI), 277-297 (LMAGLLVMTLAMLPIGMTSSL), 300-320 (LFTLICLFYIGSIIAEPARET), 340-360 (LGLAFGGALGYAGGGWLFDAG), and 369-389 (PWLMLGAIGVITFLALWWQFS).

It belongs to the major facilitator superfamily. DHA1 family. MdtH (TC 2.A.1.2.21) subfamily.

It is found in the cell inner membrane. The chain is Multidrug resistance protein MdtH from Klebsiella pneumoniae subsp. pneumoniae (strain ATCC 700721 / MGH 78578).